Here is a 278-residue protein sequence, read N- to C-terminus: Large ribosomal subunit protein uL2 (278 aa).

2 disordered regions span residues 27–58 (STPEKSLVRPLHGKGGRNAHGRITTRHKGGGH) and 224–278 (VVMN…GKKR). A compositionally biased stretch (basic residues) spans 37–58 (LHGKGGRNAHGRITTRHKGGGH). Basic and acidic residues predominate over residues 253–268 (PEGRTRKPNKPSDKLI). Basic residues predominate over residues 269 to 278 (VRRRRTGKKR).

This sequence belongs to the universal ribosomal protein uL2 family. Part of the 50S ribosomal subunit. Forms a bridge to the 30S subunit in the 70S ribosome.

One of the primary rRNA binding proteins. Required for association of the 30S and 50S subunits to form the 70S ribosome, for tRNA binding and peptide bond formation. It has been suggested to have peptidyltransferase activity; this is somewhat controversial. Makes several contacts with the 16S rRNA in the 70S ribosome. This Mycobacterium sp. (strain KMS) protein is Large ribosomal subunit protein uL2.